The chain runs to 59 residues: Large ribosomal subunit protein uL30 (59 aa).

Belongs to the universal ribosomal protein uL30 family. In terms of assembly, part of the 50S ribosomal subunit.

The protein is Large ribosomal subunit protein uL30 of Staphylococcus saprophyticus subsp. saprophyticus (strain ATCC 15305 / DSM 20229 / NCIMB 8711 / NCTC 7292 / S-41).